The chain runs to 376 residues: Chaperone protein DnaJ (376 aa).

Residues 5–70 enclose the J domain; it reads DYYEVLGVAR…EKRARYDRFG (66 aa). Residues 137 to 215 form a CR-type zinc finger; sequence GDEVTLRLPK…CKGSGQTQQV (79 aa). 8 residues coordinate Zn(2+): C150, C153, C167, C170, C189, C192, C203, and C206. CXXCXGXG motif repeat units lie at residues 150–157, 167–174, 189–196, and 203–210; these read CDECGGSG, CRHCGGAG, CPVCRGEG, and CPKCKGSG.

This sequence belongs to the DnaJ family. In terms of assembly, homodimer. Requires Zn(2+) as cofactor.

It is found in the cytoplasm. Functionally, participates actively in the response to hyperosmotic and heat shock by preventing the aggregation of stress-denatured proteins and by disaggregating proteins, also in an autonomous, DnaK-independent fashion. Unfolded proteins bind initially to DnaJ; upon interaction with the DnaJ-bound protein, DnaK hydrolyzes its bound ATP, resulting in the formation of a stable complex. GrpE releases ADP from DnaK; ATP binding to DnaK triggers the release of the substrate protein, thus completing the reaction cycle. Several rounds of ATP-dependent interactions between DnaJ, DnaK and GrpE are required for fully efficient folding. Also involved, together with DnaK and GrpE, in the DNA replication of plasmids through activation of initiation proteins. This chain is Chaperone protein DnaJ, found in Nitratidesulfovibrio vulgaris (strain ATCC 29579 / DSM 644 / CCUG 34227 / NCIMB 8303 / VKM B-1760 / Hildenborough) (Desulfovibrio vulgaris).